A 337-amino-acid chain; its full sequence is Terpene synthase 4 (337 aa).

Mg(2+) is bound by residues Asp-94 and Asp-98. The short motif at 94–98 is the D(D/E)XX(D/E) motif element; the sequence is DDIFD. A substrate-binding site is contributed by Arg-195. Mg(2+) is bound by residues Asn-241, Ser-245, and Glu-249. The NSE motif motif lies at 241-249; it reads NDIYSYHRE. Positions 320–327 match the WxxxxxRY motif motif; that stretch reads WSESCTRY.

It belongs to the terpene synthase family. Requires Mg(2+) as cofactor.

The enzyme catalyses (2E,6E)-farnesyl diphosphate = alpha-muurolene + diphosphate. It carries out the reaction (2E,6E)-farnesyl diphosphate = (-)-(E)-beta-caryophyllene + diphosphate. Its function is as follows. Terpene synthase that catalyzes the cyclization of farnesyl diphosphate (FPP) into alpha-muurolene, (-)-beta-caryophyllene, and one unidentified sesquiterpene. TPS4 shows only trace monoterpene synthase activity with geranyl diphosphate (GPP) as substrate and produces very small amounts of myrcene. P.polycephalum has a unique biology and these volatile terpenoids could function in internal communication of P.polycephalum, to mark the territory that have been explored, or they may be involved in chemotaxis. The polypeptide is Terpene synthase 4 (Physarum polycephalum (Slime mold)).